Reading from the N-terminus, the 710-residue chain is Chloride channel protein CLC-e (710 aa).

The next 12 membrane-spanning stretches (helical) occupy residues 74-94 (ELAI…VVLF), 122-142 (IGSN…VVSI), 164-184 (VKAV…LGTG), 193-213 (SVEI…KSPQ), 222-242 (GSAA…FFAV), 261-281 (TTSM…IGLG), 296-316 (PGEL…SLAL), 340-360 (VFPV…PEVL), 379-399 (GLSA…TAWC), 412-432 (SLFI…LALA), 451-471 (GLVG…TAVL), and 472-492 (LLFE…AVGM). The interval 500–534 (QSKRQETRETKETRKRKSQEAVQSLTSSDDESSTN) is disordered. Basic and acidic residues predominate over residues 502 to 511 (KRQETRETKE). Polar residues predominate over residues 520–534 (AVQSLTSSDDESSTN). 2 CBS domains span residues 565–624 (MRTR…GNNR) and 640–702 (KCKV…ATRM). Residues 667–687 (HVAVVSGSIDAPRIHPVGVLD) traverse the membrane as a helical segment.

Belongs to the chloride channel (TC 2.A.49) family. As to quaternary structure, homodimer.

Its subcellular location is the membrane. The catalysed reaction is 2 chloride(in) + H(+)(out) = 2 chloride(out) + H(+)(in). Its function is as follows. Voltage-gated thylakoid chloride (Cl) channel/transporter involved in chloride homeostasis after transition from light to dark. Influences chloroplast ultrastructure and subsequent photosynthetic electron transport. During photosynthetic response on transition from dark to low light, involved in a sequential mechanism of adaptation; VCCN1 and CLCe first trigger the activation of photoprotection, which is later down-regulated by KEA3 to a low steady state, while adjusting electron transport. Regulates photosynthesis by a pH-independent mechanism likely involving Cl(-) homeostasis. This chain is Chloride channel protein CLC-e, found in Arabidopsis thaliana (Mouse-ear cress).